The sequence spans 310 residues: Aspartate carbamoyltransferase catalytic subunit (310 aa).

2 residues coordinate carbamoyl phosphate: arginine 58 and threonine 59. Residue lysine 86 coordinates L-aspartate. Carbamoyl phosphate is bound by residues arginine 108, histidine 136, and glutamine 139. L-aspartate is bound by residues arginine 169 and arginine 222. Positions 264 and 265 each coordinate carbamoyl phosphate.

The protein belongs to the aspartate/ornithine carbamoyltransferase superfamily. ATCase family. Heterododecamer (2C3:3R2) of six catalytic PyrB chains organized as two trimers (C3), and six regulatory PyrI chains organized as three dimers (R2).

The enzyme catalyses carbamoyl phosphate + L-aspartate = N-carbamoyl-L-aspartate + phosphate + H(+). It participates in pyrimidine metabolism; UMP biosynthesis via de novo pathway; (S)-dihydroorotate from bicarbonate: step 2/3. In terms of biological role, catalyzes the condensation of carbamoyl phosphate and aspartate to form carbamoyl aspartate and inorganic phosphate, the committed step in the de novo pyrimidine nucleotide biosynthesis pathway. The chain is Aspartate carbamoyltransferase catalytic subunit from Campylobacter fetus subsp. fetus (strain 82-40).